The following is a 183-amino-acid chain: MTTKPKTLEIDNNTFLLLEGNLKRIFATPIGYTTFREFQNVVFNCAQGQQELANFLFEMLINGKLLQELPAGQKQSAQSLIVQFMMPIRVAKDIHERGEFINFITSDMLAQQERCVFLNRLSRVDGQEFLLMTDVQNTCHLIRHLLSRLLEAQKNPIGEKNLQEIQEDLDSLRAHFEELTKSV.

The protein belongs to the chlamydial CPn_0803/CT_584/TC_0873 family.

The protein is Protein CT_584 of Chlamydia trachomatis serovar D (strain ATCC VR-885 / DSM 19411 / UW-3/Cx).